A 370-amino-acid chain; its full sequence is 2-Hydroxyacid oxidase 1 (370 aa).

The region spanning 1–365 (MLPRLICIND…DKTLVRKNPL (365 aa)) is the FMN hydroxy acid dehydrogenase domain. Residue Tyr26 participates in glyoxylate binding. FMN is bound by residues 79–81 (ATA), Ser108, and Gln130. A glyoxylate-binding site is contributed by Tyr132. Thr158 provides a ligand contact to FMN. Arg167 lines the glyoxylate pocket. Lys184 is modified (N6-succinyllysine). Ser194 and Ser230 each carry phosphoserine. Residues Lys236 and Ser258 each contribute to the FMN site. Glyoxylate contacts are provided by His260 and Arg263. His260 functions as the Proton acceptor in the catalytic mechanism. FMN-binding positions include 291–295 (DGGVR) and 314–315 (GR). The Microbody targeting signal signature appears at 368-370 (SKI).

This sequence belongs to the FMN-dependent alpha-hydroxy acid dehydrogenase family. Homotetramer. FMN is required as a cofactor. Highly expressed in liver.

It localises to the peroxisome matrix. The catalysed reaction is a (2S)-2-hydroxycarboxylate + O2 = a 2-oxocarboxylate + H2O2. It catalyses the reaction glycolate + O2 = glyoxylate + H2O2. It carries out the reaction glyoxylate + O2 + H2O = oxalate + H2O2 + H(+). The enzyme catalyses 2-hydroxyhexadecanoate + O2 = 2-oxohexadecanoate + H2O2. The catalysed reaction is 2-hydroxyoctanoate + O2 = 2-oxooctanoate + H2O2. The protein operates within amino-acid biosynthesis; glycine biosynthesis. Its activity is regulated as follows. Inhibited by its product oxalate. Inhibited by high concentrations of dichlorophenolindophenol (DCIP) in vitro. In terms of biological role, broad substrate specificity (S)-2-hydroxy-acid oxidase that preferentially oxidizes glycolate. The glyoxylate produced by the oxidation of glycolate can then be utilized by alanine-glyoxylate aminotransferase for the peroxisomal synthesis of glycine; this pathway appears to be an important step for the detoxification of glyoxylate which, if allowed to accumulate, may be metabolized to oxalate with formation of kidney stones. Can also catalyze the oxidation of glyoxylate, and long chain hydroxyacids such as 2-hydroxyhexadecanoate and 2-hydroxyoctanoate, albeit with much lower catalytic efficiency. Active in vitro with the artificial electron acceptor 2,6-dichlorophenolindophenol (DCIP), but O2 is believed to be the physiological electron acceptor, leading to the production of H2O2. Is not active on L-lactate and 2-hydroxybutanoate. The sequence is that of 2-Hydroxyacid oxidase 1 from Homo sapiens (Human).